We begin with the raw amino-acid sequence, 148 residues long: Large ribosomal subunit protein bL9 (148 aa).

The protein belongs to the bacterial ribosomal protein bL9 family.

In terms of biological role, binds to the 23S rRNA. This is Large ribosomal subunit protein bL9 from Leptospira biflexa serovar Patoc (strain Patoc 1 / Ames).